A 37-amino-acid chain; its full sequence is Cytochrome b6-f complex subunit 5 (37 aa).

The chain crosses the membrane as a helical span at residues 5–25 (LLCGIVLGLIPVTLAGLFFAA).

The protein belongs to the PetG family. As to quaternary structure, the 4 large subunits of the cytochrome b6-f complex are cytochrome b6, subunit IV (17 kDa polypeptide, PetD), cytochrome f and the Rieske protein, while the 4 small subunits are PetG, PetL, PetM and PetN. The complex functions as a dimer.

It localises to the cellular thylakoid membrane. Functionally, component of the cytochrome b6-f complex, which mediates electron transfer between photosystem II (PSII) and photosystem I (PSI), cyclic electron flow around PSI, and state transitions. PetG is required for either the stability or assembly of the cytochrome b6-f complex. In Thermosynechococcus vestitus (strain NIES-2133 / IAM M-273 / BP-1), this protein is Cytochrome b6-f complex subunit 5.